A 127-amino-acid chain; its full sequence is MSTFYVTAVPKSHSSLPKCQAMMSRTLLTGMAMYLDSSHAGAASMQVSWPPLLTSLGSKEMKSRWNWGSITCIMCFTCVGSQLSMSSSKASNFSGPLQLYQRGIGHITNPYRRPPAPAWPCSSSGTT.

The Extracellular portion of the chain corresponds to 1 to 69; the sequence is MSTFYVTAVP…EMKSRWNWGS (69 aa). Residues 70 to 88 traverse the membrane as a helical segment; sequence ITCIMCFTCVGSQLSMSSS. Residues 89 to 127 lie on the Cytoplasmic side of the membrane; sequence KASNFSGPLQLYQRGIGHITNPYRRPPAPAWPCSSSGTT.

Prominently expressed in brain and heart tissues. Weakly expressed in aorta, adrenal gland, and lung tissues.

It localises to the cell membrane. Its function is as follows. In the Dahl salt-resistant strain, acts as a dual receptor for both endothelin-1 and the signal sequence of vascular endothelial growth factor A and does not act as a receptor for angiotensin-2. Does not bind the VEGFA mature protein. In the Dahl salt-sensitive strain, acts as a dual endothelin-1/angiotensin-2 receptor that is functionally coupled to a calcium-mobilizing transduction system, responding equivalently to both endothelin-1/EDN1 and angiotensin-2 peptides in a highly specific manner. May play a role in angiogenesis with a significant role in cardiovascular and neural development. This Rattus norvegicus (Rat) protein is Dual endothelin-1/VEGF signal peptide receptor.